The chain runs to 610 residues: MAAGRLPSARAVLAPLFLGLALLSVGPAPARALHNVTAELFGAEAWGTLAAFGDLNSDKQTDLFVLRERNDLIVFLADQSAPYFKPKVKVSLKTLSALVTSVVPGDYDGDSQMDVLLTYFPQNHTNSELGAVIFWGQNQTLDPKNMTILNRTFHDQPLIMDFNGDLIPDVFGITNESSQPQILLGGDLSWHPALTTKSKMRDPHSHAFIDLTEDFTADLFLTTLTASNAFQFEIWENLGGNFSIHSVFEKPKNLVVVGQSAFADFDGDGHMDHLLPGCEDKDCQKSAIYLMRSGTGQWVPVLQDFSNKGTLWGFVPFVHEEQPTTIPIPLTLHIGDYNMDGYPDALAILKNTSGSNQQAFLLENVPCNNASCEEVHRMFKVYWDLAGLNLIKDAIVATFFDIYEDGILDIIVLSKGYTKNDVAIHTLKNNFEADAYFVKVIVLSGLCSNDCPRKITPFGVNQPGPYIMYTTVDANGYLKNGSAGQLSQSAHLALQLPYNVLGLGRSANFLDHLFVGIPRPSGEKSIRKQEWTAIIPNSQLIVIPYPHNVPRSWSAKLYLTPSNIVLLTAVALIGVCIFILAIIAILHWQEKKADDREKRQEAHRFHFDAM.

The first 32 residues, 1–32 (MAAGRLPSARAVLAPLFLGLALLSVGPAPARA), serve as a signal peptide directing secretion. Residues N35, N123, N138, N145, N150, N175, and N241 are each glycosylated (N-linked (GlcNAc...) asparagine). One copy of the FG-GAP 1; atypical repeat lies at 98–135 (LVTSVVPGDYDGDSQMDVLLTYFPQNHTNSELGAVIFW). One copy of the FG-GAP 2; atypical repeat lies at 153–183 (FHDQPLIMDFNGDLIPDVFGITNESSQPQIL). The stretch at 256-291 (VVGQSAFADFDGDGHMDHLLPGCEDKDCQKSAIYLM) is one FG-GAP 3; atypical repeat. 3 N-linked (GlcNAc...) asparagine glycosylation sites follow: N351, N369, and N480. A helical membrane pass occupies residues 565 to 585 (VLLTAVALIGVCIFILAIIAI).

It belongs to the TIP family. Interacts with RUVBL1, RUVBL2 and alpha-tubulin.

It is found in the secreted. The protein localises to the membrane. Its function is as follows. Modulator of T-cell function. Has a protective effect in graft versus host disease model. This chain is T-cell immunomodulatory protein, found in Mus musculus (Mouse).